The primary structure comprises 415 residues: Peptide chain release factor subunit 1 (415 aa).

This sequence belongs to the eukaryotic release factor 1 family. In terms of assembly, heterodimer of two subunits, one of which binds GTP.

It is found in the cytoplasm. In terms of biological role, directs the termination of nascent peptide synthesis (translation) in response to the termination codons UAA, UAG and UGA. The chain is Peptide chain release factor subunit 1 from Thermococcus sibiricus (strain DSM 12597 / MM 739).